The following is a 280-amino-acid chain: Beta carbonic anhydrase 4 (280 aa).

Ala-2 bears the N-acetylalanine mark. Residues 47–76 are a coiled coil; the sequence is NVAAAKIKALTAELKELDSSNSDAIERIKT. Thr-57 is modified (phosphothreonine). The residue at position 117 (Ser-117) is a Phosphoserine. S-nitrosocysteine is present on Cys-223.

The protein belongs to the beta-class carbonic anhydrase family. As to quaternary structure, interacts with DTX56. As to expression, strongly expressed in aerial tissues including leaves, stems, flowers and siliques. Accumulates in both guard cells and mesophyll cells.

The protein resides in the cell membrane. It catalyses the reaction hydrogencarbonate + H(+) = CO2 + H2O. Functionally, reversible hydration of carbon dioxide. Together with BCA1, involved in the CO(2) signaling pathway which controls gas-exchange between plants and the atmosphere by modulating stomatal development and movements. Promotes water use efficiency. The sequence is that of Beta carbonic anhydrase 4 from Arabidopsis thaliana (Mouse-ear cress).